The following is a 156-amino-acid chain: Ribosomal RNA large subunit methyltransferase H (156 aa).

S-adenosyl-L-methionine contacts are provided by residues leucine 73, glycine 104, and leucine 123–leucine 128.

This sequence belongs to the RNA methyltransferase RlmH family. As to quaternary structure, homodimer.

It localises to the cytoplasm. The catalysed reaction is pseudouridine(1915) in 23S rRNA + S-adenosyl-L-methionine = N(3)-methylpseudouridine(1915) in 23S rRNA + S-adenosyl-L-homocysteine + H(+). Specifically methylates the pseudouridine at position 1915 (m3Psi1915) in 23S rRNA. This Laribacter hongkongensis (strain HLHK9) protein is Ribosomal RNA large subunit methyltransferase H.